We begin with the raw amino-acid sequence, 129 residues long: uncharacterized protein (129 aa).

The next 2 helical transmembrane spans lie at 4–24 (FKFLKCVYLCFMVFVRLILII) and 37–57 (VISLLFIILTFLLILGCDLSI).

This sequence to B.burgdorferi BBF20.

The protein resides in the cell membrane. This is an uncharacterized protein from Borreliella burgdorferi (strain ATCC 35210 / DSM 4680 / CIP 102532 / B31) (Borrelia burgdorferi).